The following is a 277-amino-acid chain: Putative phosphoenolpyruvate synthase regulatory protein (277 aa).

Residue 156-163 participates in ADP binding; that stretch reads GVSRAGKT.

The protein belongs to the pyruvate, phosphate/water dikinase regulatory protein family. PSRP subfamily.

It carries out the reaction [pyruvate, water dikinase] + ADP = [pyruvate, water dikinase]-phosphate + AMP + H(+). The enzyme catalyses [pyruvate, water dikinase]-phosphate + phosphate + H(+) = [pyruvate, water dikinase] + diphosphate. Functionally, bifunctional serine/threonine kinase and phosphorylase involved in the regulation of the phosphoenolpyruvate synthase (PEPS) by catalyzing its phosphorylation/dephosphorylation. In Deinococcus radiodurans (strain ATCC 13939 / DSM 20539 / JCM 16871 / CCUG 27074 / LMG 4051 / NBRC 15346 / NCIMB 9279 / VKM B-1422 / R1), this protein is Putative phosphoenolpyruvate synthase regulatory protein.